The chain runs to 597 residues: Period protein homolog lin-42 (597 aa).

The tract at residues 1-44 is disordered; that stretch reads MEPAGHSSATHNIVVPNANPTQPQPLAPAMREEGATLSPPNTWS. Positions 155–223 constitute a PAS domain; the sequence is LQASHVSSNF…VRQAHIDLHN (69 aa). 4 disordered regions span residues 313–335, 418–450, 473–509, and 555–597; these read PVPSTSRHSHHHHHSSLKDQNQG, KSQSRPESPAKQDEPFDEKKYPPQTPLTREALT, DDVPSSPPAKRTTPIHWTSSSQNHYRTMAPAPPPPPG, and DGLL…DSQN. Over residues 425–438 the composition is skewed to basic and acidic residues; the sequence is SPAKQDEPFDEKKY. The span at 487–497 shows a compositional bias: polar residues; that stretch reads IHWTSSSQNHY. The segment covering 561–577 has biased composition (low complexity); the sequence is GATSTGGASPTSGTNSP.

It localises to the nucleus. Its subcellular location is the cytoplasm. Its function is as follows. Transcriptional repressor which interacts with the promoter region of target genes. Has a specific role in developmental timing where it regulates temporal expression of a number of miRNAs and mRNAs. Controls temporal cell fate transition during embryonic and early larval development by restricting the expression of specific miRNAs, including let-7, miR-48, lin-4, miR-35 and miR-58. Restricts the accumulation of lin-29 in the hypodermis to the larval L4 stage, thus controlling terminal differentiation of seam cells. Has a role in the miRNA-mediated specification of asymmetric gene expression patterns in gustatory neurons. May also regulate genes involved in other biological processes including transport, small molecule metabolism, and growth. Inhibits dauer formation, by antagonizing daf-12. In terms of biological role, specifically required for maintaining the timing of larval development and molting cycle rhythms. The protein is Period protein homolog lin-42 of Caenorhabditis elegans.